The following is a 598-amino-acid chain: Polypeptide N-acetylgalactosaminyltransferase 17 (598 aa).

Residues 1–6 (MASLRR) are Cytoplasmic-facing. A helical; Signal-anchor for type II membrane protein transmembrane segment spans residues 7-27 (VKVLLVLNLIAVAGFVIFLAK). Over 28–598 (CRPIAVRSGD…QRWAIKNPIK (571 aa)) the chain is Lumenal. Asn50 is a glycosylation site (N-linked (GlcNAc...) asparagine). 2 disulfides stabilise this stretch: Cys142-Cys373 and Cys364-Cys443. The tract at residues 151–262 (LPQISIIFIF…AGWAEPVLSR (112 aa)) is catalytic subdomain A. 2 residues coordinate substrate: Asp192 and Arg223. Mn(2+) contacts are provided by Asp246, His248, and His378. Positions 319–381 (PIRTPAMIGC…PCSRVAHIER (63 aa)) are catalytic subdomain B. Residues Arg381 and Tyr386 each contribute to the substrate site. Asn461 and Asn486 each carry an N-linked (GlcNAc...) asparagine glycan. In terms of domain architecture, Ricin B-type lectin spans 465–594 (AYGELRNNKA…SCTGQRWAIK (130 aa)). 3 disulfide bridges follow: Cys478–Cys494, Cys526–Cys541, and Cys568–Cys586.

Belongs to the glycosyltransferase 2 family. GalNAc-T subfamily. The cofactor is Mn(2+).

It localises to the golgi apparatus membrane. It catalyses the reaction L-seryl-[protein] + UDP-N-acetyl-alpha-D-galactosamine = a 3-O-[N-acetyl-alpha-D-galactosaminyl]-L-seryl-[protein] + UDP + H(+). The enzyme catalyses L-threonyl-[protein] + UDP-N-acetyl-alpha-D-galactosamine = a 3-O-[N-acetyl-alpha-D-galactosaminyl]-L-threonyl-[protein] + UDP + H(+). It functions in the pathway protein modification; protein glycosylation. Its function is as follows. May catalyze the initial reaction in O-linked oligosaccharide biosynthesis, the transfer of an N-acetyl-D-galactosamine residue to a serine or threonine residue on the protein receptor. The chain is Polypeptide N-acetylgalactosaminyltransferase 17 from Mus musculus (Mouse).